Consider the following 188-residue polypeptide: Acireductone dioxygenase (188 aa).

The Fe(2+) site is built by histidine 97, histidine 99, glutamate 103, and histidine 141. Ni(2+) is bound by residues histidine 97, histidine 99, glutamate 103, and histidine 141.

It belongs to the acireductone dioxygenase (ARD) family. In terms of assembly, monomer. Requires Fe(2+) as cofactor. Ni(2+) is required as a cofactor.

The enzyme catalyses 1,2-dihydroxy-5-(methylsulfanyl)pent-1-en-3-one + O2 = 3-(methylsulfanyl)propanoate + CO + formate + 2 H(+). It catalyses the reaction 1,2-dihydroxy-5-(methylsulfanyl)pent-1-en-3-one + O2 = 4-methylsulfanyl-2-oxobutanoate + formate + 2 H(+). It functions in the pathway amino-acid biosynthesis; L-methionine biosynthesis via salvage pathway; L-methionine from S-methyl-5-thio-alpha-D-ribose 1-phosphate: step 5/6. Functionally, catalyzes 2 different reactions between oxygen and the acireductone 1,2-dihydroxy-3-keto-5-methylthiopentene (DHK-MTPene) depending upon the metal bound in the active site. Fe-containing acireductone dioxygenase (Fe-ARD) produces formate and 2-keto-4-methylthiobutyrate (KMTB), the alpha-ketoacid precursor of methionine in the methionine recycle pathway. Ni-containing acireductone dioxygenase (Ni-ARD) produces methylthiopropionate, carbon monoxide and formate, and does not lie on the methionine recycle pathway. This is Acireductone dioxygenase from Gluconobacter oxydans (strain 621H) (Gluconobacter suboxydans).